Consider the following 90-residue polypeptide: MEAGSRVIMQVLLLALVVQVTLSQHWSYGWLPGGKRSVGELEATIRMMGTGGVVSLPDEANAQIQERLRPYNIINDDSSHFDRKKRFPNN.

An N-terminal signal peptide occupies residues 1-23 (MEAGSRVIMQVLLLALVVQVTLS). A Pyrrolidone carboxylic acid modification is found at glutamine 24. Position 33 is a glycine amide (glycine 33).

It belongs to the GnRH family. Expressed only in the terminal nerve nucleus of the telencephalon.

The protein resides in the secreted. Stimulates the secretion of gonadotropins. This Haplochromis burtoni (Burton's mouthbrooder) protein is Progonadoliberin-3 (gnrh3).